The chain runs to 228 residues: tRNA (guanine-N(1)-)-methyltransferase (228 aa).

S-adenosyl-L-methionine contacts are provided by residues Gly111 and 130–135 (IGDFVL).

Belongs to the RNA methyltransferase TrmD family. In terms of assembly, homodimer.

It localises to the cytoplasm. The catalysed reaction is guanosine(37) in tRNA + S-adenosyl-L-methionine = N(1)-methylguanosine(37) in tRNA + S-adenosyl-L-homocysteine + H(+). Functionally, specifically methylates guanosine-37 in various tRNAs. The chain is tRNA (guanine-N(1)-)-methyltransferase from Ureaplasma urealyticum serovar 10 (strain ATCC 33699 / Western).